The primary structure comprises 203 residues: Snake venom metalloproteinase atroxase (203 aa).

E1 carries the pyrrolidone carboxylic acid (Glu) modification. N-linked (GlcNAc...) asparagine glycosylation occurs at N5. The Peptidase M12B domain occupies 9 to 203; it reads RYIELVVVAD…KQYNPQIXNK (195 aa). Ca(2+) contacts are provided by E12 and D96. H145 contributes to the Zn(2+) binding site. E146 is an active-site residue. Residues H149 and H155 each coordinate Zn(2+). A disulfide bridge links C160 with C167. Position 202 (N202) interacts with Ca(2+).

The protein belongs to the venom metalloproteinase (M12B) family. P-I subfamily. Monomer. It depends on Zn(2+) as a cofactor. The N-terminus is blocked. In terms of tissue distribution, expressed by the venom gland.

The protein resides in the secreted. The enzyme catalyses Cleavage of 5-His-|-Leu-6, 9-Ser-|-His-10, 10-His-|-Leu-11, 14-Ala-|-Leu-15 and 16-Tyr-|-Leu-17 in insulin B chain.. With respect to regulation, inhibited by EDTA and alpha2-macroglobulin. Functionally, snake venom zinc metalloprotease that has Aalpha, Bbeta fibrin(ogen)olytic activities. It cleaves the Aalpha chain of fibrinogen first followed by the Bbeta chain and shows no effect on the gamma chain. Does not induce or inhibit platelet aggregation, and is unable to activate plasminogen. Exhibits low lethality when tested on mice. Intravenous administration results in thrombolysis within one hour followed by recanalization. Fibrinogenolytic activity results in a 60% decrease in the rat's plasma fibrinogen level. Histological examination of kidney, liver, heart and lung tissue shows no necrosis nor hemorrhage. This is Snake venom metalloproteinase atroxase from Crotalus atrox (Western diamondback rattlesnake).